Consider the following 225-residue polypeptide: Peroxiredoxin-2E-2, chloroplastic (225 aa).

Residues Met-1 to Arg-42 constitute a chloroplast transit peptide. The Thioredoxin domain occupies Ile-63–Leu-225. Cys-111 serves as the catalytic Cysteine sulfenic acid (-SOH) intermediate.

Belongs to the peroxiredoxin family. Prx5 subfamily. As to quaternary structure, monomer.

It is found in the plastid. Its subcellular location is the chloroplast stroma. It carries out the reaction [glutaredoxin]-dithiol + a hydroperoxide = [glutaredoxin]-disulfide + an alcohol + H2O. In terms of biological role, thiol-specific peroxidase that catalyzes the reduction of hydrogen peroxide and organic hydroperoxides to water and alcohols, respectively. Plays a role in cell protection against oxidative stress by detoxifying peroxides. May be involved in chloroplast redox homeostasis. The sequence is that of Peroxiredoxin-2E-2, chloroplastic (PRXIIE-2) from Oryza sativa subsp. japonica (Rice).